We begin with the raw amino-acid sequence, 396 residues long: Purine ribonucleoside efflux pump NepI (396 aa).

Residues 1 to 21 (MSEFIAENRGANAITRPNWSA) are Cytoplasmic-facing. The helical transmembrane segment at 22 to 42 (VFSVAFCVACLIIVEFLPVSL) threads the bilayer. Topologically, residues 43–54 (LTPMAQDLGISE) are periplasmic. Residues 55 to 75 (GVAGQSVTVTAFVAMFASLFI) form a helical membrane-spanning segment. The Cytoplasmic segment spans residues 76–85 (TQTIQATDRR). A helical membrane pass occupies residues 86–106 (YVVILFAVLLTLSCLLVSFAN). Position 107 (Ser107) is a topological domain, periplasmic. The helical transmembrane segment at 108-128 (FSLLLIGRACLGLALGGFWAM) threads the bilayer. Topologically, residues 129–147 (SASLTMRLVPPRTVPKALS) are cytoplasmic. The helical transmembrane segment at 148–168 (VIFGAVSIALVIAAPLGSFLG) threads the bilayer. The Periplasmic portion of the chain corresponds to 169-175 (ELIGWRN). A helical membrane pass occupies residues 176–196 (VFNAAAAMGVLCIFWIIKSLP). The Cytoplasmic portion of the chain corresponds to 197–215 (SLPGEPSHQKQNTFRLLQR). A helical membrane pass occupies residues 216–236 (PGVMAGMIAIFMSFAGQFAFF). The Periplasmic portion of the chain corresponds to 237–255 (TYIRPVYMNLAGFGVDGLT). Residues 256–276 (LVLLSFGIASFVGTSLSSFIL) traverse the membrane as a helical segment. At 277-281 (KRSVK) the chain is on the cytoplasmic side. The chain crosses the membrane as a helical span at residues 282 to 302 (LALAGAPFVLALSALVLTLWG). The Periplasmic portion of the chain corresponds to 303–305 (SYK). The helical transmembrane segment at 306–326 (IVATGVAIIWGLTFALIPVGW) threads the bilayer. Over 327–343 (STWITRSLADQAEKAGS) the chain is Cytoplasmic. The chain crosses the membrane as a helical span at residues 344–364 (IQVAVIQLANTCGAAIGGYAL). The Periplasmic segment spans residues 365 to 366 (DN). Residues 367–387 (IGLTSPLMLSGTLMLLTALLV) traverse the membrane as a helical segment. Residues 388–396 (TAKVKMKKS) lie on the Cytoplasmic side of the membrane.

This sequence belongs to the major facilitator superfamily. DHA1 family. NepI (TC 2.A.1.2.26) subfamily.

The protein localises to the cell inner membrane. The enzyme catalyses inosine(in) + H(+)(out) = inosine(out) + H(+)(in). It carries out the reaction guanosine(in) + H(+)(out) = guanosine(out) + H(+)(in). Functionally, involved in the efflux of purine ribonucleosides, such as inosine and guanosine. The protein is Purine ribonucleoside efflux pump NepI of Escherichia coli O6:H1 (strain CFT073 / ATCC 700928 / UPEC).